A 379-amino-acid polypeptide reads, in one-letter code: uncharacterized protein (379 aa).

Disordered stretches follow at residues 1–25 (MASDWRRQSTSRGIPNEGQNDEKGK), 128–158 (QGKTTSATTSNSTIRGKPSFGRENSAKIERT), and 355–379 (TEKTSILSPRRRQKRMRSLSSQGDI). Residues 128–141 (QGKTTSATTSNSTI) show a composition bias toward polar residues.

This is an uncharacterized protein from Caenorhabditis elegans.